Here is a 297-residue protein sequence, read N- to C-terminus: MENFQKVEKIGEGTYGVVYKARNRETGEIVALKKIRLDTETEGVPSTAIREISLLKELNHPNIVKLLDVIHTENKLYLVFEFLNQDLKKFMDGSNISGISLALVKSYLFQLLQGLAFCHSHRVLHRDLKPQNLLINSDGAIKLADFGLARAFGVPVRTFTHEVVTLWYRAPEILLGCKFYSTAVDIWSLGCIFAEMITRRALFPGDSEIDQLFRIFRTLGTPDEVSWPGVTTMPDYKSTFPKWIRQDFSKVVPPLDEDGRDLLAQMLQYDSNKRISAKVALTHPFFRDVSRPTPHLI.

A Protein kinase domain is found at phenylalanine 4–phenylalanine 286. ATP is bound by residues isoleucine 10 to valine 18, lysine 33, glutamate 81 to leucine 83, and aspartate 86. At threonine 14 the chain carries Phosphothreonine. At tyrosine 15 the chain carries Phosphotyrosine. The active-site Proton acceptor is aspartate 127. ATP-binding positions include lysine 129–asparagine 132 and aspartate 145. Phosphothreonine; by CAK is present on threonine 160.

The protein belongs to the protein kinase superfamily. CMGC Ser/Thr protein kinase family. CDC2/CDKX subfamily. As to quaternary structure, interacts with spdya.

It carries out the reaction L-seryl-[protein] + ATP = O-phospho-L-seryl-[protein] + ADP + H(+). The catalysed reaction is L-threonyl-[protein] + ATP = O-phospho-L-threonyl-[protein] + ADP + H(+). With respect to regulation, phosphorylation at Thr-14 or Tyr-15 inactivates the enzyme, while phosphorylation at Thr-160 activates it. Activated by spdya. Its function is as follows. Serine/threonine-protein kinase involved in the control of the cell cycle; essential for meiosis, but dispensable for mitosis. Triggers duplication of centrosomes and DNA. Acts at the G1-S transition to promote the E2F transcriptional program and the initiation of DNA synthesis, and modulates G2 progression; controls the timing of entry into mitosis/meiosis by controlling the subsequent activation of cyclin B/CDK1 by phosphorylation, and coordinates the activation of cyclin B/CDK1 at the centrosome and in the nucleus. Crucial role in orchestrating a fine balance between cellular proliferation, cell death, and DNA repair in embryonic stem cells (ESCs). Activity of CDK2 is maximal during S phase and G2; activated by interaction with cyclin E during the early stages of DNA synthesis to permit G1-S transition, and subsequently activated by cyclin A2 (cyclin A1 in germ cells) during the late stages of DNA replication to drive the transition from S phase to mitosis, the G2 phase. This is Cyclin-dependent kinase 2 (cdk2) from Xenopus laevis (African clawed frog).